The sequence spans 338 residues: Ketol-acid reductoisomerase (NADP(+)) (338 aa).

The region spanning 1–181 (MKVYYDKDCN…GGGRSGIIET (181 aa)) is the KARI N-terminal Rossmann domain. NADP(+) is bound by residues 24–27 (YGSQ), arginine 47, serine 50, serine 52, and 82–85 (DETQ). The active site involves histidine 107. Residue glycine 133 participates in NADP(+) binding. Residues 182-327 (NFREETETDL…ARLRAMMPWI (146 aa)) form the KARI C-terminal knotted domain. Mg(2+)-binding residues include aspartate 190, glutamate 194, glutamate 226, and glutamate 230. Residue serine 251 coordinates substrate.

This sequence belongs to the ketol-acid reductoisomerase family. Mg(2+) serves as cofactor.

The enzyme catalyses (2R)-2,3-dihydroxy-3-methylbutanoate + NADP(+) = (2S)-2-acetolactate + NADPH + H(+). It catalyses the reaction (2R,3R)-2,3-dihydroxy-3-methylpentanoate + NADP(+) = (S)-2-ethyl-2-hydroxy-3-oxobutanoate + NADPH + H(+). It participates in amino-acid biosynthesis; L-isoleucine biosynthesis; L-isoleucine from 2-oxobutanoate: step 2/4. The protein operates within amino-acid biosynthesis; L-valine biosynthesis; L-valine from pyruvate: step 2/4. Functionally, involved in the biosynthesis of branched-chain amino acids (BCAA). Catalyzes an alkyl-migration followed by a ketol-acid reduction of (S)-2-acetolactate (S2AL) to yield (R)-2,3-dihydroxy-isovalerate. In the isomerase reaction, S2AL is rearranged via a Mg-dependent methyl migration to produce 3-hydroxy-3-methyl-2-ketobutyrate (HMKB). In the reductase reaction, this 2-ketoacid undergoes a metal-dependent reduction by NADPH to yield (R)-2,3-dihydroxy-isovalerate. This chain is Ketol-acid reductoisomerase (NADP(+)), found in Pelobacter propionicus (strain DSM 2379 / NBRC 103807 / OttBd1).